The following is a 57-amino-acid chain: Small ribosomal subunit protein bS21 (57 aa).

The interval 31–57 (EVRKRKHYEKPSVRRKKKSEAARKRKF) is disordered. A compositionally biased stretch (basic residues) spans 33–57 (RKRKHYEKPSVRRKKKSEAARKRKF).

This sequence belongs to the bacterial ribosomal protein bS21 family.

In Halalkalibacterium halodurans (strain ATCC BAA-125 / DSM 18197 / FERM 7344 / JCM 9153 / C-125) (Bacillus halodurans), this protein is Small ribosomal subunit protein bS21 (rpsU).